Consider the following 314-residue polypeptide: Nucleotide-binding protein CE1710 (314 aa).

The disordered stretch occupies residues 1–29 (MNQTPGSTVPETATPVTSPASSPSAPETT). Low complexity predominate over residues 7–29 (STVPETATPVTSPASSPSAPETT). 37 to 44 (GMSGAGLS) serves as a coordination point for ATP. GTP is bound at residue 88–91 (DVRS).

The protein belongs to the RapZ-like family.

Functionally, displays ATPase and GTPase activities. This chain is Nucleotide-binding protein CE1710, found in Corynebacterium efficiens (strain DSM 44549 / YS-314 / AJ 12310 / JCM 11189 / NBRC 100395).